Reading from the N-terminus, the 281-residue chain is Endochitinase B (281 aa).

The first 33 residues, 1–33, serve as a signal peptide directing secretion; the sequence is MAMAKAGAPRVSAAQLVTLGLSLLCAVAGPAAA. Positions 34-68 constitute a Chitin-binding type-1 domain; it reads QNCGCQPNVCCSKFGYCGTTDEYCGDGCQSGPCRS. 4 disulfides stabilise this stretch: Cys36/Cys44, Cys38/Cys50, Cys43/Cys57, and Cys61/Cys66. Residues 69 to 78 are hinge region (Gly-rich); it reads GGGGSSGGGG. Residues 79 to 281 form a catalytic region; the sequence is ANVASVVTGS…GVDPGPNLTC (203 aa). An intrachain disulfide couples Cys101 to Cys150. Glu145 serves as the catalytic Proton donor. Asn156 carries an N-linked (GlcNAc...) asparagine glycan. Intrachain disulfides connect Cys162/Cys171 and Cys249/Cys281. A glycan (N-linked (GlcNAc...) asparagine) is linked at Asn278.

The protein belongs to the glycosyl hydrolase 19 family. Chitinase class I subfamily.

The protein localises to the secreted. It carries out the reaction Random endo-hydrolysis of N-acetyl-beta-D-glucosaminide (1-&gt;4)-beta-linkages in chitin and chitodextrins.. Defense against chitin-containing fungal pathogens. Its action is countered by fungal polyglycine hydrolases, that cleaves within its hinge region (Gly-rich) to disrupt chitin-binding. This Zea mays (Maize) protein is Endochitinase B.